Reading from the N-terminus, the 462-residue chain is UDP-N-acetylmuramoylalanine--D-glutamate ligase (462 aa).

117–123 (GTNGKTT) provides a ligand contact to ATP.

Belongs to the MurCDEF family.

The protein resides in the cytoplasm. It catalyses the reaction UDP-N-acetyl-alpha-D-muramoyl-L-alanine + D-glutamate + ATP = UDP-N-acetyl-alpha-D-muramoyl-L-alanyl-D-glutamate + ADP + phosphate + H(+). Its pathway is cell wall biogenesis; peptidoglycan biosynthesis. Functionally, cell wall formation. Catalyzes the addition of glutamate to the nucleotide precursor UDP-N-acetylmuramoyl-L-alanine (UMA). The chain is UDP-N-acetylmuramoylalanine--D-glutamate ligase from Synechococcus sp. (strain CC9902).